We begin with the raw amino-acid sequence, 523 residues long: NAD(P)H-quinone oxidoreductase subunit 2 (523 aa).

14 helical membrane-spanning segments follow: residues Ala29–Ala49, Trp57–Trp77, Leu94–Trp114, Pro123–Gly143, Leu147–Tyr167, Leu182–Leu202, Ala223–Phe243, Pro255–Leu275, Leu291–Gln311, Met317–Thr337, Val345–Phe365, Leu389–Gly409, Leu424–Ile444, and Ile477–Phe497.

Belongs to the complex I subunit 2 family. As to quaternary structure, NDH-1 can be composed of about 15 different subunits; different subcomplexes with different compositions have been identified which probably have different functions.

It localises to the cellular thylakoid membrane. It catalyses the reaction a plastoquinone + NADH + (n+1) H(+)(in) = a plastoquinol + NAD(+) + n H(+)(out). The catalysed reaction is a plastoquinone + NADPH + (n+1) H(+)(in) = a plastoquinol + NADP(+) + n H(+)(out). Its function is as follows. NDH-1 shuttles electrons from an unknown electron donor, via FMN and iron-sulfur (Fe-S) centers, to quinones in the respiratory and/or the photosynthetic chain. The immediate electron acceptor for the enzyme in this species is believed to be plastoquinone. Couples the redox reaction to proton translocation, and thus conserves the redox energy in a proton gradient. Cyanobacterial NDH-1 also plays a role in inorganic carbon-concentration. In Prochlorococcus marinus (strain MIT 9313), this protein is NAD(P)H-quinone oxidoreductase subunit 2.